The sequence spans 192 residues: NADH-ubiquinone oxidoreductase subunit 9 (192 aa).

Belongs to the complex I 30 kDa subunit family. In terms of assembly, complex I is composed of about 30 different subunits.

The protein resides in the mitochondrion inner membrane. The enzyme catalyses a ubiquinone + NADH + 5 H(+)(in) = a ubiquinol + NAD(+) + 4 H(+)(out). Core subunit of the mitochondrial membrane respiratory chain NADH dehydrogenase (Complex I) that is believed to belong to the minimal assembly required for catalysis. Complex I functions in the transfer of electrons from NADH to the respiratory chain. The immediate electron acceptor for the enzyme is believed to be ubiquinone. This Prototheca wickerhamii protein is NADH-ubiquinone oxidoreductase subunit 9 (NAD9).